The primary structure comprises 914 residues: Probable dipeptidyl-aminopeptidase B (914 aa).

Residues 1 to 82 (MGAEKRINDE…GLPPPSGAQR (82 aa)) are disordered. The Cytoplasmic segment spans residues 1-88 (MGAEKRINDE…GAQRTPKKVS (88 aa)). The span at 26–38 (DSTSTASISLALI) shows a compositional bias: low complexity. The chain crosses the membrane as a helical; Signal-anchor for type II membrane protein span at residues 89–109 (IIFWLVAALCVGGWLVAFFVF). The Vacuolar segment spans residues 110–914 (MGSPKKDSDK…RSLLKRMSNA (805 aa)). Residues Asn128, Asn295, Asn347, and Asn617 are each glycosylated (N-linked (GlcNAc...) asparagine). Residue Ser751 is the Charge relay system of the active site. Asn810 carries an N-linked (GlcNAc...) asparagine glycan. Active-site charge relay system residues include Asp828 and His861. Asn897 carries an N-linked (GlcNAc...) asparagine glycan.

This sequence belongs to the peptidase S9B family.

It localises to the vacuole membrane. It catalyses the reaction Release of an N-terminal dipeptide, Xaa-Yaa-|-Zaa-, from a polypeptide, preferentially when Yaa is Pro, provided Zaa is neither Pro nor hydroxyproline.. Functionally, type IV dipeptidyl-peptidase which removes N-terminal dipeptides sequentially from polypeptides having unsubstituted N-termini provided that the penultimate residue is proline. In Uncinocarpus reesii (strain UAMH 1704), this protein is Probable dipeptidyl-aminopeptidase B (DAPB).